Here is a 310-residue protein sequence, read N- to C-terminus: Ribosomal RNA small subunit methyltransferase H (310 aa).

Residues 32–34 (GGH), Asp-52, Phe-79, Asp-100, and Gln-107 contribute to the S-adenosyl-L-methionine site.

It belongs to the methyltransferase superfamily. RsmH family.

Its subcellular location is the cytoplasm. The catalysed reaction is cytidine(1402) in 16S rRNA + S-adenosyl-L-methionine = N(4)-methylcytidine(1402) in 16S rRNA + S-adenosyl-L-homocysteine + H(+). Functionally, specifically methylates the N4 position of cytidine in position 1402 (C1402) of 16S rRNA. This is Ribosomal RNA small subunit methyltransferase H from Bacillus cereus (strain B4264).